The sequence spans 114 residues: Large ribosomal subunit protein bL19 (114 aa).

The protein belongs to the bacterial ribosomal protein bL19 family.

This protein is located at the 30S-50S ribosomal subunit interface and may play a role in the structure and function of the aminoacyl-tRNA binding site. This chain is Large ribosomal subunit protein bL19, found in Clavibacter sepedonicus (Clavibacter michiganensis subsp. sepedonicus).